The primary structure comprises 118 residues: Small ribosomal subunit protein uS12cz/uS12cy (118 aa).

Belongs to the universal ribosomal protein uS12 family. In terms of assembly, part of the 30S ribosomal subunit.

It localises to the plastid. The protein localises to the chloroplast. Its function is as follows. With S4 and S5 plays an important role in translational accuracy. Located at the interface of the 30S and 50S subunits. In Helianthus annuus (Common sunflower), this protein is Small ribosomal subunit protein uS12cz/uS12cy (rps12-A).